A 224-amino-acid polypeptide reads, in one-letter code: Peroxiredoxin-6 (224 aa).

In terms of domain architecture, Thioredoxin spans 5–169 (LLLGDEAPNF…ILRVVISLQL (165 aa)). Residues 31–40 (DSWGILFSHP) are required and sufficient for targeting to lysosomes and lamellar bodies. The residue at position 44 (Thr44) is a Phosphothreonine. Cys47 (cysteine sulfenic acid (-SOH) intermediate; for peroxidase activity) is an active-site residue. Lys63 carries the N6-acetyllysine modification. Tyr89 carries the phosphotyrosine modification. The active-site For phospholipase activity is Asp140. Thr177 carries the post-translational modification Phosphothreonine; by MAPK. Lys209 is subject to N6-acetyllysine; alternate. Lys209 carries the N6-succinyllysine; alternate modification.

It belongs to the peroxiredoxin family. Prx6 subfamily. In terms of assembly, homodimer. Interacts with GSTP1; mediates PRDX6 glutathionylation and regeneration. Interacts with APEX1. Interacts with STH. May interact with FAM168B. May interact with HTR2A. Irreversibly inactivated by overoxidation of Cys-47 to sulfinic acid (Cys-SO(2)H) and sulfonic acid (Cys-SO(3)H) forms upon oxidative stress. In terms of processing, phosphorylation at Thr-177 by MAP kinases increases the phospholipase activity of the enzyme. The phosphorylated form exhibits a greater lysophosphatidylcholine acyltransferase activity compared to the non-phosphorylated form.

It localises to the cytoplasm. The protein localises to the lysosome. The enzyme catalyses a hydroperoxide + 2 glutathione = an alcohol + glutathione disulfide + H2O. The catalysed reaction is a 1,2-diacyl-sn-glycero-3-phosphocholine + H2O = a 1-acyl-sn-glycero-3-phosphocholine + a fatty acid + H(+). It carries out the reaction a 1-acyl-sn-glycero-3-phosphocholine + an acyl-CoA = a 1,2-diacyl-sn-glycero-3-phosphocholine + CoA. It catalyses the reaction 1-hexadecanoyl-sn-glycero-3-phosphocholine + hexadecanoyl-CoA = 1,2-dihexadecanoyl-sn-glycero-3-phosphocholine + CoA. The enzyme catalyses 1,2-dihexadecanoyl-sn-glycero-3-phosphocholine + H2O = 1-hexadecanoyl-sn-glycero-3-phosphocholine + hexadecanoate + H(+). Its function is as follows. Thiol-specific peroxidase that catalyzes the reduction of hydrogen peroxide and organic hydroperoxides to water and alcohols, respectively. Can reduce H(2)O(2) and short chain organic, fatty acid, and phospholipid hydroperoxides. Also has phospholipase activity, and can therefore either reduce the oxidized sn-2 fatty acyl group of phospholipids (peroxidase activity) or hydrolyze the sn-2 ester bond of phospholipids (phospholipase activity). These activities are dependent on binding to phospholipids at acidic pH and to oxidized phospholipds at cytosolic pH. Plays a role in cell protection against oxidative stress by detoxifying peroxides and in phospholipid homeostasis. Exhibits acyl-CoA-dependent lysophospholipid acyltransferase which mediates the conversion of lysophosphatidylcholine (1-acyl-sn-glycero-3-phosphocholine or LPC) into phosphatidylcholine (1,2-diacyl-sn-glycero-3-phosphocholine or PC). Shows a clear preference for LPC as the lysophospholipid and for palmitoyl CoA as the fatty acyl substrate. The chain is Peroxiredoxin-6 (PRDX6) from Macaca fascicularis (Crab-eating macaque).